The chain runs to 301 residues: MSIEKTYCGFIAIVGRPNVGKSTLLNKLLGQKISITSRKAQTTRHRIVGIHTEGPYQAIYVDTPGLHIEEKRAINRLMNKAASSSIGDVELVIFVVEGTRWTPDDEMVLNKLRDGKAPVILAVNKVDNVQEKADLLPHLQFLASQMSFLDIVPISAETGMNVDTIASIVRKHLPEATHHFPEDYITDRSQRFMASEIIREKLMRFLGAELPYSVTVEIERFVTNERGGYDINGLILVEREGQKKMVIGNKGAKIKTIGIEARKDMQEMFEAPVHLELWVKVKSGWADDERALRSLGYVDDL.

In terms of domain architecture, Era-type G spans 7-175 (YCGFIAIVGR…ASIVRKHLPE (169 aa)). Residues 15-22 (GRPNVGKS) form a G1 region. 15-22 (GRPNVGKS) is a GTP binding site. Residues 41 to 45 (QTTRH) are G2. Residues 62–65 (DTPG) are G3. GTP contacts are provided by residues 62-66 (DTPGL) and 124-127 (NKVD). The G4 stretch occupies residues 124 to 127 (NKVD). Residues 154–156 (ISA) form a G5 region. One can recognise a KH type-2 domain in the interval 206–283 (LGAELPYSVT…HLELWVKVKS (78 aa)).

This sequence belongs to the TRAFAC class TrmE-Era-EngA-EngB-Septin-like GTPase superfamily. Era GTPase family. As to quaternary structure, monomer.

It is found in the cytoplasm. Its subcellular location is the cell inner membrane. Its function is as follows. An essential GTPase that binds both GDP and GTP, with rapid nucleotide exchange. Plays a role in 16S rRNA processing and 30S ribosomal subunit biogenesis and possibly also in cell cycle regulation and energy metabolism. This Salmonella arizonae (strain ATCC BAA-731 / CDC346-86 / RSK2980) protein is GTPase Era.